The sequence spans 464 residues: 3-isopropylmalate dehydratase large subunit (464 aa).

[4Fe-4S] cluster contacts are provided by C345, C405, and C408.

The protein belongs to the aconitase/IPM isomerase family. LeuC type 1 subfamily. Heterodimer of LeuC and LeuD. Requires [4Fe-4S] cluster as cofactor.

The catalysed reaction is (2R,3S)-3-isopropylmalate = (2S)-2-isopropylmalate. Its pathway is amino-acid biosynthesis; L-leucine biosynthesis; L-leucine from 3-methyl-2-oxobutanoate: step 2/4. In terms of biological role, catalyzes the isomerization between 2-isopropylmalate and 3-isopropylmalate, via the formation of 2-isopropylmaleate. This chain is 3-isopropylmalate dehydratase large subunit, found in Bacteroides fragilis (strain ATCC 25285 / DSM 2151 / CCUG 4856 / JCM 11019 / LMG 10263 / NCTC 9343 / Onslow / VPI 2553 / EN-2).